A 221-amino-acid chain; its full sequence is Ras-related protein Rab-28 (221 aa).

Position 2 is an N-acetylserine (Ser2). A Phosphoserine modification is found at Ser8. 9 residues coordinate GTP: Gly21, Gly24, Lys25, Thr26, Ser27, Gly38, Lys39, Tyr41, and Thr44. Thr26 is a Mg(2+) binding site. The interval 35 to 49 is switch I; sequence ETFGKQYKQTIGLDF. The Mg(2+) site is built by Thr44 and Asp68. Residues 68-85 are switch II; that stretch reads DIGGQTIGGKMLDKYIYG. GTP is bound by residues Gly71, Asn129, Lys130, Asp132, Ala160, and Lys161. Cys218 bears the Cysteine methyl ester mark. The S-farnesyl cysteine moiety is linked to residue Cys218. A propeptide spans 219-221 (removed in mature form); the sequence is AVQ.

The protein belongs to the small GTPase superfamily. Rab family. Interacts (prenylated form) with PDE6D; the interaction promotes RAB28 delivery to the photoreceptor outer segments. Interacts with KCNJ13; the interaction may facilitate cone outer segments phagocytosis. Interacts with RELA; the interaction contributes to RELA transport from cytoplasm to nucleus. Mg(2+) serves as cofactor. Post-translationally, isoprenylated. As to expression, testis, brain, and to much lower levels heart, skeletal muscle and fat cells. Expressed in the retina.

The protein resides in the cell membrane. It is found in the cytoplasm. It localises to the cytoskeleton. Its subcellular location is the cilium basal body. The protein localises to the nucleus. The catalysed reaction is GTP + H2O = GDP + phosphate + H(+). With respect to regulation, regulated by guanine nucleotide exchange factors (GEFs) which promote the exchange of bound GDP for free GTP. Regulated by GTPase activating proteins (GAPs) which increase the GTP hydrolysis activity. Inhibited by GDP dissociation inhibitors (GDIs). In terms of biological role, the small GTPases Rab are key regulators of intracellular membrane trafficking, from the formation of transport vesicles to their fusion with membranes. Rabs cycle between an inactive GDP-bound form and an active GTP-bound form that is able to recruit to membranes different sets of downstream effectors directly responsible for vesicle formation, movement, tethering and fusion. RAB28 is required for shedding and phagocytosis of cone cell outer segments (OS) discs in the retina. Also participates in nuclear factor kappa-B p65/RELA nuclear transport in endothelial cells. In Rattus norvegicus (Rat), this protein is Ras-related protein Rab-28.